Reading from the N-terminus, the 163-residue chain is uncharacterized protein (163 aa).

This is an uncharacterized protein from Methanocaldococcus jannaschii (strain ATCC 43067 / DSM 2661 / JAL-1 / JCM 10045 / NBRC 100440) (Methanococcus jannaschii).